Here is a 145-residue protein sequence, read N- to C-terminus: Bacilliredoxin BrxB (145 aa).

Catalysis depends on nucleophile residues C52 and C54. An S-bacillithiol cysteine disulfide modification is found at C52. The short motif at 52–54 (CGC) is the CXC active site motif element. A disulfide bond links C52 and C54.

It belongs to the bacilliredoxin family. Interacts with BrxC. In terms of processing, N-terminal Cys of the CXC active site motif can react with bacillithiol (BSH) to form mixed disulfides. S-bacillithiolation protects Cys residues against overoxidation by acting as a redox switch in response to oxidative stress.

S-bacillithiolation is the formation of mixed disulfide bonds between protein thiols and the general thiol reductant bacillithiol (BSH) under oxidative stress. BSH is an equivalent of glutathione (GSH) in Firmicutes. This protein is a dithiol bacilliredoxin, which debacillithiolates (removes BSH) the S-bacillithiolated OhrR (OhrR-SSB) in vitro and in vivo NaOCl-generated S-bacillithiolated MetE (MetE-SSB). Involved in maintaining redox homeostasis in response to disulfide stress conditions. This Bacillus subtilis (strain 168) protein is Bacilliredoxin BrxB.